The primary structure comprises 191 residues: GDP-mannose pyrophosphatase (191 aa).

GDP-alpha-D-mannose-binding positions include Y17, 38–40 (KRE), R67, and 85–87 (AGL). In terms of domain architecture, Nudix hydrolase spans 43 to 180 (DRGNGATILL…EIRDGKTVLL (138 aa)). Positions 85, 100, and 104 each coordinate Mg(2+). Residues 86–106 (GLLDNDEPEACIRKEAIEETG) carry the Nudix box motif. Residues E104, E127, 150–151 (DE), and K176 contribute to the GDP-alpha-D-mannose site. E151 contributes to the Mg(2+) binding site.

It belongs to the Nudix hydrolase family. NudK subfamily. Homodimer. Mg(2+) is required as a cofactor.

The catalysed reaction is GDP-alpha-D-mannose + H2O = alpha-D-mannose 1-phosphate + GMP + 2 H(+). Functionally, nucleoside diphosphate sugar hydrolase that hydrolyzes GDP-mannose as its preferred substrate, yielding GMP and mannose-1-phosphate. The protein is GDP-mannose pyrophosphatase (nudK) of Citrobacter koseri (strain ATCC BAA-895 / CDC 4225-83 / SGSC4696).